Reading from the N-terminus, the 618-residue chain is Manganese lipoxygenase (618 aa).

An N-terminal signal peptide occupies residues 1-16; the sequence is MRSRILAIVFAARHVA. Residues 36-45 show a composition bias toward low complexity; that stretch reads SSTTVLPSPT. The segment at 36–58 is disordered; sequence SSTTVLPSPTQYTLPNNDPNQGA. The segment covering 46–58 has biased composition (polar residues); it reads QYTLPNNDPNQGA. Residues 47 to 617 enclose the Lipoxygenase domain; it reads YTLPNNDPNQ…NPAVNPFFLS (571 aa). N-linked (GlcNAc...) asparagine glycosylation is found at Asn60, Asn91, Asn106, Asn116, and Asn157. His290, His294, His478, and Asn482 together coordinate Mn(2+). Residue Asn513 is glycosylated (N-linked (GlcNAc...) asparagine). A Mn(2+)-binding site is contributed by Val618.

This sequence belongs to the lipoxygenase family. Mn(2+) is required as a cofactor. N- and O-glycosylated.

It is found in the secreted. It carries out the reaction (9Z,12Z)-octadecadienoate + O2 = (11S)-hydroperoxy-(9Z,12Z)-octadecadienoate. The enzyme catalyses (9Z,12Z)-octadecadienoate + O2 = (13R)-hydroperoxy-(9Z,11E)-octadecadienoate. It catalyses the reaction (9Z,12Z,15Z)-octadecatrienoate + O2 = (11S)-hydroperoxy-(9Z,12Z,15Z)-octadecatrienoate. The catalysed reaction is (9Z,12Z,15Z)-octadecatrienoate + O2 = (13R)-hydroperoxy-(9Z,11E,15Z)-octadecatrienoate. Functionally, lipoxygenase that metabolizes linoleic and alpha-linolenic acids to 11S- and 13R-hydroperoxy fatty acids. At the end of lipoxygenation, the intermediate product 11S-HPODE from linoleic acid is then transformed into 13R-HPODE as the final product. It also acts on alpha-linolenic acid producing 11S-HPOTrE and 13R-HPOTrE with subsequent transformation of 11S-HPOTrE to 13R-HPOTrE as the final product. Gamma-linolenic acid is a poor substrate. Oleate and arachidonate are not substrates. The chain is Manganese lipoxygenase from Gaeumannomyces tritici (Wheat and barley take-all root rot fungus).